A 427-amino-acid polypeptide reads, in one-letter code: Enolase (427 aa).

Gln-163 is a (2R)-2-phosphoglycerate binding site. The Proton donor role is filled by Glu-205. Mg(2+) contacts are provided by Asp-242, Glu-283, and Asp-310. (2R)-2-phosphoglycerate contacts are provided by Lys-335, Arg-364, Ser-365, and Lys-386. Catalysis depends on Lys-335, which acts as the Proton acceptor.

This sequence belongs to the enolase family. Mg(2+) is required as a cofactor.

It is found in the cytoplasm. The protein resides in the secreted. The protein localises to the cell surface. It catalyses the reaction (2R)-2-phosphoglycerate = phosphoenolpyruvate + H2O. It participates in carbohydrate degradation; glycolysis; pyruvate from D-glyceraldehyde 3-phosphate: step 4/5. Catalyzes the reversible conversion of 2-phosphoglycerate (2-PG) into phosphoenolpyruvate (PEP). It is essential for the degradation of carbohydrates via glycolysis. The chain is Enolase from Salinispora arenicola (strain CNS-205).